The chain runs to 186 residues: Potassium-transporting ATPase KdpC subunit 1 (186 aa).

The chain crosses the membrane as a helical span at residues 10 to 30 (LTIITMVLCGFLFPLAITLIG).

The protein belongs to the KdpC family. The system is composed of three essential subunits: KdpA, KdpB and KdpC.

The protein resides in the cell membrane. In terms of biological role, part of the high-affinity ATP-driven potassium transport (or Kdp) system, which catalyzes the hydrolysis of ATP coupled with the electrogenic transport of potassium into the cytoplasm. This subunit acts as a catalytic chaperone that increases the ATP-binding affinity of the ATP-hydrolyzing subunit KdpB by the formation of a transient KdpB/KdpC/ATP ternary complex. The polypeptide is Potassium-transporting ATPase KdpC subunit 1 (Staphylococcus aureus (strain Mu50 / ATCC 700699)).